The following is a 220-amino-acid chain: MVYKLVLLFCIASLGYSVEYKNTICPPRQDYRYWYFAAELTIGVNYDINSTIIGECHMSESYIDRNANIVLTGYGLEINMTIMDTDQRFVAAAEGVGKDNKLSVLLFTTQRLDKVHHNISVTITCMEMNCGTTKYDSDLPESIHKSSSCDITINGSCVTCVNLETDPTKINPHYLHPKDKYLYHNSEYGMRGSYGVTFIDELNQCLLDIKELSYDICYRE.

An N-terminal signal peptide occupies residues 1–17 (MVYKLVLLFCIASLGYS).

The protein belongs to the orthopoxvirus OPG038 family. Homooligomer. Interacts with host CD80 and CD86 when secreted. In terms of processing, glycosylated by host.

It localises to the host endoplasmic reticulum. It is found in the secreted. In terms of biological role, plays a role in immune evasion. When secreted, inhibits T-cell activation by preventing the binding of host CD80 and CD86 to soluble CTLA4 and CD28. In the infected cell, may inhibits host NF kappa B activation. The polypeptide is Early protein OPG038 (OPG038) (Homo sapiens (Human)).